We begin with the raw amino-acid sequence, 403 residues long: Vitamin D(3) 25-hydroxylase (403 aa).

Cysteine 347 provides a ligand contact to heme.

The protein belongs to the cytochrome P450 family. The cofactor is heme.

The protein localises to the cytoplasm. The catalysed reaction is 5beta-cholestane-3alpha,7alpha,12alpha-triol + 6 reduced [adrenodoxin] + 3 O2 + 5 H(+) = (25R)-3alpha,7alpha,12alpha-trihydroxy-5beta-cholestan-26-oate + 6 oxidized [adrenodoxin] + 4 H2O. With respect to regulation, activated by partially methylated beta-cyclodextrin. Functionally, hydroxylates vitamin D(3) into 25-hydroxyvitamin D(3) and 1-alpha,25-dihydroxyvitamin D(3), its physiologically active forms. It first hydroxylates the C-25 position of vitamin D(3) to form 25-hydroxyvitamin D(3), then subsequently hydroxylates the C-1-alpha position to form 1-alpha,25-dihydroxyvitamin D(3). Also displays 25-hydroxylase activity on vitamin D(2) and 7-dehydrocholesterol. May play a role in the biosynthesis of steroid metabolic intermediates. This Pseudonocardia autotrophica (Amycolata autotrophica) protein is Vitamin D(3) 25-hydroxylase.